The primary structure comprises 228 residues: Orotidine 5'-phosphate decarboxylase (228 aa).

Residues Asp11, Lys33, Asp60–Thr69, Thr117, Arg178, Gln186, Gly206, and Arg207 each bind substrate. Lys62 functions as the Proton donor in the catalytic mechanism.

The protein belongs to the OMP decarboxylase family. Type 1 subfamily. As to quaternary structure, homodimer.

It carries out the reaction orotidine 5'-phosphate + H(+) = UMP + CO2. It functions in the pathway pyrimidine metabolism; UMP biosynthesis via de novo pathway; UMP from orotate: step 2/2. Its function is as follows. Catalyzes the decarboxylation of orotidine 5'-monophosphate (OMP) to uridine 5'-monophosphate (UMP). This is Orotidine 5'-phosphate decarboxylase from Ehrlichia canis (strain Jake).